The following is a 198-amino-acid chain: Recombination protein RecR (198 aa).

The C4-type zinc finger occupies 57–72; the sequence is CSVCGHITDRDPCYIC. The Toprim domain maps to 80-175; sequence SVVCVVQEPK…KVTRIAHGLP (96 aa).

It belongs to the RecR family.

In terms of biological role, may play a role in DNA repair. It seems to be involved in an RecBC-independent recombinational process of DNA repair. It may act with RecF and RecO. This is Recombination protein RecR from Bacillus anthracis (strain A0248).